Reading from the N-terminus, the 225-residue chain is mRNA-decapping protein D10 (225 aa).

The 184-residue stretch at 35–218 folds into the Nudix hydrolase domain; it reads AKYPLSVIGI…NVIKYIINAV (184 aa). A Nudix box motif is present at residues 116–137; the sequence is GKIKDLESITNCLVREIKEELN. Mg(2+) is bound at residue Glu122. The active-site Nucleophile is the Glu131. Residue Glu135 participates in Mn(2+) binding. Asp157 is a Mg(2+) binding site.

This sequence belongs to the Nudix hydrolase family. Mg(2+) serves as cofactor. Requires Mn(2+) as cofactor.

Decapping enzyme required for the removal of the 5'-end m7GpppN cap tethered to viral and host mRNAs to allow their decay in cells. May therefore accelerate viral and cellular mRNA turnover to eliminate competing host mRNAs and allow stage-specific synthesis of viral proteins. Acceleration of the turnover of cellular transcripts may even promote the shutoff of host protein synthesis. The sequence is that of mRNA-decapping protein D10 from Fowlpox virus (strain NVSL) (FPV).